The chain runs to 623 residues: MLAWRPGRPDGCRAAGGRRYNPGHDCIKASVSLNSAARNAPAGSQPVKAELWKRVYSRVGSYWKGLVLAVLLMAGAAATQPTLAVIMKPLLDDGFSGAKPHYVWFLPLAVVGLILLRGICNFFSDYLLAWVANNVLRGIRGEMFERLLGLPDADFKRGDTGRLLNRFTIDAGNVTGYATDVITVLVRETLVVIALIGVLLYMSWALTLIILVMLPVSVGIARAFTRRLRRINRETVNMNAELTRVVSEGIDGQRVIKLFDGYDAERRRFDFVNSRLRRFAMRSATADAALTPLTQVCISVAVGAVIAVALSQANSGALTVGSFASFMAALAQIFDPIKRLTNLAGKMQKMLVAAESVFTLVDQTPEADAGTRALPEPVRGKVEFRAVSHRFPDADRDTVSAVSFLVEPGQTVALVGRSGSGKTTLVNMLPRFVLPDGGDILFDDVPIQDLTLRSLRSHLSLVSQDVVLFDDTIAANVGYGAGGTVDDARVRDALAAANLLEFVDGLPLGIHTPVGQNAARLSGGQRQRLAIARALIKNAPVLILDEATSALDNESERQVQASLERLMRGRTTLVIAHRLSTVQNADRIIVLDAGKIVEHGPHSELLAANGLYASLYNMQFRED.

The next 5 helical transmembrane spans lie at leucine 66–isoleucine 86, valine 103–phenylalanine 123, leucine 190–isoleucine 210, leucine 290–leucine 310, and alanine 317–isoleucine 337. Residues valine 67–lysine 349 enclose the ABC transmembrane type-1 domain. One can recognise an ABC transporter domain in the interval valine 382–methionine 618. Glycine 416–threonine 423 is an ATP binding site.

Belongs to the ABC transporter superfamily. Lipid exporter (TC 3.A.1.106) family. As to quaternary structure, homodimer.

The protein resides in the cell inner membrane. It carries out the reaction ATP + H2O + lipid A-core oligosaccharideSide 1 = ADP + phosphate + lipid A-core oligosaccharideSide 2.. Its function is as follows. Involved in lipopolysaccharide (LPS) biosynthesis. Translocates lipid A-core from the inner to the outer leaflet of the inner membrane. Transmembrane domains (TMD) form a pore in the inner membrane and the ATP-binding domain (NBD) is responsible for energy generation. This chain is ATP-dependent lipid A-core flippase, found in Bordetella bronchiseptica (strain ATCC BAA-588 / NCTC 13252 / RB50) (Alcaligenes bronchisepticus).